The following is a 420-amino-acid chain: Tryptophan synthase beta chain (420 aa).

The residue at position 112 (Lys112) is an N6-(pyridoxal phosphate)lysine.

Belongs to the TrpB family. Tetramer of two alpha and two beta chains. It depends on pyridoxal 5'-phosphate as a cofactor.

The catalysed reaction is (1S,2R)-1-C-(indol-3-yl)glycerol 3-phosphate + L-serine = D-glyceraldehyde 3-phosphate + L-tryptophan + H2O. The protein operates within amino-acid biosynthesis; L-tryptophan biosynthesis; L-tryptophan from chorismate: step 5/5. Its function is as follows. The beta subunit is responsible for the synthesis of L-tryptophan from indole and L-serine. In Thermosipho africanus (strain TCF52B), this protein is Tryptophan synthase beta chain.